The sequence spans 1147 residues: Myosin heavy chain IB (1147 aa).

The 669-residue stretch at 9–677 (RGVDDLVLMP…TLFHLEECLD (669 aa)) folds into the Myosin motor domain. 103–110 (GESGAGKT) contributes to the ATP binding site. Residue Ser315 is modified to Phosphoserine. Positions 551–573 (CDALMEALSRCSPHYIRCIKPND) are actin-binding. In terms of domain architecture, TH1 spans 715-900 (KERQRHSVNR…RANIQIGIAT (186 aa)). 2 disordered regions span residues 901–954 (GLPK…YSQP) and 969–1089 (AAVP…APAA). 2 stretches are compositionally biased toward gly residues: residues 916 to 951 (SGGG…GGGY) and 975 to 1079 (GRGG…GAGR). Residues 1090–1147 (PAKPQVKALYDYDAQTGDELTFKEGDTIIVHQKDPAGWWEGELNGKRGWVPANYVQDI) enclose the SH3 domain.

Belongs to the TRAFAC class myosin-kinesin ATPase superfamily. Myosin family. As to quaternary structure, myosin I heavy chain is single-headed. Dimer of a heavy and a light chain. Inability to self-assemble into filaments.

Its function is as follows. Myosin is a protein that binds to F-actin and has ATPase activity that is activated by F-actin. The chain is Myosin heavy chain IB (MIB) from Acanthamoeba castellanii (Amoeba).